The following is a 414-amino-acid chain: uncharacterized protein (414 aa).

The interval 204-230 (LVGTPAPGPNGSNSDGDSERASQDVRD) is disordered. Over residues 220 to 230 (DSERASQDVRD) the composition is skewed to basic and acidic residues.

It belongs to the CdaR family.

This is an uncharacterized protein from Mycobacterium tuberculosis (strain CDC 1551 / Oshkosh).